Consider the following 597-residue polypeptide: MNKSKIRNFSIIAHIDHGKSTLADRILEITQTVSTRELKAQHLDSMDLEQERGITIKLNAVQIKYKDYIFHLIDTPGHVDFTYEVSRSLAASEGALLLVDATQGIEAQTLANAYLALENNLKIIPIINKIDLPSADPERIKGEIEEVIGISAKDTILISAKSGLNVEKVLEEIVDKISYPIDADDDKPLKALVFDSYFDAYRGVILLVRIFEGKIAVNDQFKFISTNKQFHVIELGVRTPTEVKKPFLESGEVGWIAASIRDAKDVSVGDTLTLVKNPTKEALPGYKKVKAVVFTGFYPIDGKDYPVLKESLEKISLSDSSITWELESSKALGFGFRVGFLGMLHMEVLQERLKREFNIDIIATAPSVEYKVYLTNNKVEIVSNPSDLPDRNYIKNIKEPFIRSFILVTEEFIGGIMELCQSKRGVYVNIEYIDKRVKIIYELPLSEIILDFFDKLKSISKGYASFDYEFIEYRDADLVKVDILLNKEKVDAFSFISHRENAYERSKELALKLKDVIPKQSFEIPIQAIIGAKVIARETIKAYRKDVTAKLYGGDVTRRQKLLKKQKEGKKRMKSIGSVEVPQEAFLSVLKSNMDKK.

The tr-type G domain occupies 4–181 (SKIRNFSIIA…EIVDKISYPI (178 aa)). GTP-binding positions include 16–21 (DHGKST) and 128–131 (NKID).

It belongs to the TRAFAC class translation factor GTPase superfamily. Classic translation factor GTPase family. LepA subfamily.

The protein resides in the cell membrane. It carries out the reaction GTP + H2O = GDP + phosphate + H(+). Its function is as follows. Required for accurate and efficient protein synthesis under certain stress conditions. May act as a fidelity factor of the translation reaction, by catalyzing a one-codon backward translocation of tRNAs on improperly translocated ribosomes. Back-translocation proceeds from a post-translocation (POST) complex to a pre-translocation (PRE) complex, thus giving elongation factor G a second chance to translocate the tRNAs correctly. Binds to ribosomes in a GTP-dependent manner. The chain is Elongation factor 4 from Mycoplasmopsis pulmonis (strain UAB CTIP) (Mycoplasma pulmonis).